Consider the following 176-residue polypeptide: Ribosome maturation factor RimM (176 aa).

Positions 93-172 constitute a PRC barrel domain; the sequence is KDEFFQFDII…EILVKGARDI (80 aa).

The protein belongs to the RimM family. Binds ribosomal protein uS19.

The protein resides in the cytoplasm. Functionally, an accessory protein needed during the final step in the assembly of 30S ribosomal subunit, possibly for assembly of the head region. Essential for efficient processing of 16S rRNA. May be needed both before and after RbfA during the maturation of 16S rRNA. It has affinity for free ribosomal 30S subunits but not for 70S ribosomes. This Campylobacter concisus (strain 13826) protein is Ribosome maturation factor RimM.